The following is a 489-amino-acid chain: Glutamyl-tRNA(Gln) amidotransferase subunit A (489 aa).

Residues lysine 80 and serine 160 each act as charge relay system in the active site. Serine 184 functions as the Acyl-ester intermediate in the catalytic mechanism.

The protein belongs to the amidase family. GatA subfamily. Heterotrimer of A, B and C subunits.

The catalysed reaction is L-glutamyl-tRNA(Gln) + L-glutamine + ATP + H2O = L-glutaminyl-tRNA(Gln) + L-glutamate + ADP + phosphate + H(+). Its function is as follows. Allows the formation of correctly charged Gln-tRNA(Gln) through the transamidation of misacylated Glu-tRNA(Gln) in organisms which lack glutaminyl-tRNA synthetase. The reaction takes place in the presence of glutamine and ATP through an activated gamma-phospho-Glu-tRNA(Gln). The sequence is that of Glutamyl-tRNA(Gln) amidotransferase subunit A from Wolbachia pipientis wMel.